A 240-amino-acid chain; its full sequence is Phosphoribosylaminoimidazole-succinocarboxamide synthase (240 aa).

Belongs to the SAICAR synthetase family.

It catalyses the reaction 5-amino-1-(5-phospho-D-ribosyl)imidazole-4-carboxylate + L-aspartate + ATP = (2S)-2-[5-amino-1-(5-phospho-beta-D-ribosyl)imidazole-4-carboxamido]succinate + ADP + phosphate + 2 H(+). Its pathway is purine metabolism; IMP biosynthesis via de novo pathway; 5-amino-1-(5-phospho-D-ribosyl)imidazole-4-carboxamide from 5-amino-1-(5-phospho-D-ribosyl)imidazole-4-carboxylate: step 1/2. The polypeptide is Phosphoribosylaminoimidazole-succinocarboxamide synthase (Wolbachia pipientis subsp. Culex pipiens (strain wPip)).